The sequence spans 257 residues: Zinc uptake system ATP-binding protein ZurA (257 aa).

The ABC transporter domain maps to I5 to E241. G37–S44 contributes to the ATP binding site.

It belongs to the ABC transporter superfamily.

In terms of biological role, involved in a zinc uptake transport system. This chain is Zinc uptake system ATP-binding protein ZurA (zurA), found in Listeria innocua serovar 6a (strain ATCC BAA-680 / CLIP 11262).